Consider the following 218-residue polypeptide: MDSSLKTQEPQVVETSPSPVAQEPPQVADKPAIVPSPIAQEPDNDVPAPGNEFAEFAAGCFWGVELAFQRIPGVTVTEVGYTHGISHNPSYEDVCTNTTNHAEVVRVQYDPKECTYETLLDLFWSRHNPTTLNRQGELLGAQYRSGIYFYTPEQEKLARESLEKEQKKLEDKIVTEILPAKKFYKAEEYHQQYLVKGGMHGNAQSPAKSCKDPIRCYG.

Residues 1 to 19 show a composition bias toward polar residues; sequence MDSSLKTQEPQVVETSPSP. Positions 1–30 are disordered; the sequence is MDSSLKTQEPQVVETSPSPVAQEPPQVADK. Position 205 is a phosphoserine (serine 205).

It belongs to the MsrA Met sulfoxide reductase family.

It localises to the cytoplasm. The protein localises to the cytosol. It carries out the reaction L-methionyl-[protein] + [thioredoxin]-disulfide + H2O = L-methionyl-(S)-S-oxide-[protein] + [thioredoxin]-dithiol. The enzyme catalyses [thioredoxin]-disulfide + L-methionine + H2O = L-methionine (S)-S-oxide + [thioredoxin]-dithiol. Activated during dark in short day conditions. Functionally, catalyzes the reduction of methionine sulfoxide (MetSO) to methionine in proteins. Plays a protective role against oxidative stress by restoring activity to proteins that have been inactivated by methionine oxidation. Prevents cellular oxidative damage in long nights. MSRA family specifically reduces the MetSO S-enantiomer. This chain is Peptide methionine sulfoxide reductase A2 (MRSA2), found in Arabidopsis thaliana (Mouse-ear cress).